Reading from the N-terminus, the 233-residue chain is Charged multivesicular body protein 4c (233 aa).

2 disordered regions span residues 1 to 24 (MSKLGKFFKGGGSSKSRAAPSPQE) and 173 to 233 (QEEL…AWAT). Positions 1 to 153 (MSKLGKFFKG…EISEAFSQRV (153 aa)) are intramolecular interaction with C-terminus. The stretch at 125-183 (LNKIDDLMQEITEQQDIAQEISEAFSQRVGFGDDFDEDELMAELEELEQEELNKKMTNI) forms a coiled coil. The tract at residues 154–233 (GFGDDFDEDE…DIKQLAAWAT (80 aa)) is intramolecular interaction with N-terminus. Residues 204–216 (SSTARRSRAASSQ) show a composition bias toward low complexity. Ser210 carries the phosphoserine; by AURKB modification.

The protein belongs to the SNF7 family. In terms of assembly, probable core component of the endosomal sorting required for transport complex III (ESCRT-III). ESCRT-III components are thought to multimerize to form a flat lattice on the perimeter membrane of the endosome. Several assembly forms of ESCRT-III may exist that interact and act sequentially. Self-associates. Interacts with CHMP2A. Interacts with CHMP4A. Interacts with CHMP4B. Interacts with CHMP6. Interacts with VPS4A. Interacts with PDCD6IP; the interaction is direct. In terms of processing, phosphorylated at Ser-210 by AURKB during cytokinesis: together with ZFYVE19/ANCHR, phosphorylated CHMP4C retains abscission-competent VPS4 (VPS4A and/or VPS4B) at the midbody ring until abscission checkpoint signaling is terminated at late cytokinesis. As to expression, expressed in heart, spleen and kidney.

The protein resides in the cytoplasm. The protein localises to the cytosol. It is found in the late endosome membrane. It localises to the midbody. Its subcellular location is the midbody ring. Probable core component of the endosomal sorting required for transport complex III (ESCRT-III) which is involved in multivesicular bodies (MVBs) formation and sorting of endosomal cargo proteins into MVBs. MVBs contain intraluminal vesicles (ILVs) that are generated by invagination and scission from the limiting membrane of the endosome and mostly are delivered to lysosomes enabling degradation of membrane proteins, such as stimulated growth factor receptors, lysosomal enzymes and lipids. The MVB pathway appears to require the sequential function of ESCRT-O, -I,-II and -III complexes. ESCRT-III proteins mostly dissociate from the invaginating membrane before the ILV is released. The ESCRT machinery also functions in topologically equivalent membrane fission events, such as the terminal stages of cytokinesis and the budding of enveloped viruses (HIV-1 and other lentiviruses). Key component of the cytokinesis checkpoint, a process required to delay abscission to prevent both premature resolution of intercellular chromosome bridges and accumulation of DNA damage: upon phosphorylation by AURKB, together with ZFYVE19/ANCHR, retains abscission-competent VPS4 (VPS4A and/or VPS4B) at the midbody ring until abscission checkpoint signaling is terminated at late cytokinesis. Deactivation of AURKB results in dephosphorylation of CHMP4C followed by its dissociation from ANCHR and VPS4 and subsequent abscission. ESCRT-III proteins are believed to mediate the necessary vesicle extrusion and/or membrane fission activities, possibly in conjunction with the AAA ATPase VPS4. Involved in HIV-1 p6- and p9-dependent virus release. CHMP4A/B/C are required for the exosomal release of SDCBP, CD63 and syndecan. The chain is Charged multivesicular body protein 4c (CHMP4C) from Homo sapiens (Human).